A 198-amino-acid chain; its full sequence is Acireductone dioxygenase (198 aa).

4 residues coordinate Fe(2+): histidine 97, histidine 99, glutamate 103, and histidine 141. Histidine 97, histidine 99, glutamate 103, and histidine 141 together coordinate Ni(2+).

The protein belongs to the acireductone dioxygenase (ARD) family. Monomer. Requires Fe(2+) as cofactor. It depends on Ni(2+) as a cofactor.

It catalyses the reaction 1,2-dihydroxy-5-(methylsulfanyl)pent-1-en-3-one + O2 = 3-(methylsulfanyl)propanoate + CO + formate + 2 H(+). The catalysed reaction is 1,2-dihydroxy-5-(methylsulfanyl)pent-1-en-3-one + O2 = 4-methylsulfanyl-2-oxobutanoate + formate + 2 H(+). It participates in amino-acid biosynthesis; L-methionine biosynthesis via salvage pathway; L-methionine from S-methyl-5-thio-alpha-D-ribose 1-phosphate: step 5/6. Functionally, catalyzes 2 different reactions between oxygen and the acireductone 1,2-dihydroxy-3-keto-5-methylthiopentene (DHK-MTPene) depending upon the metal bound in the active site. Fe-containing acireductone dioxygenase (Fe-ARD) produces formate and 2-keto-4-methylthiobutyrate (KMTB), the alpha-ketoacid precursor of methionine in the methionine recycle pathway. Ni-containing acireductone dioxygenase (Ni-ARD) produces methylthiopropionate, carbon monoxide and formate, and does not lie on the methionine recycle pathway. In Synechococcus elongatus (strain ATCC 33912 / PCC 7942 / FACHB-805) (Anacystis nidulans R2), this protein is Acireductone dioxygenase.